The sequence spans 438 residues: Nudix hydrolase 19, chloroplastic (438 aa).

Residues 1 to 36 constitute a chloroplast transit peptide; it reads MLALFLSSSSYPTLSFLSRSVTLNLARTTTLSALTM. Zn(2+) contacts are provided by cysteine 212, cysteine 215, cysteine 230, and cysteine 235. Substrate contacts are provided by residues tyrosine 240, 276 to 278, glutamate 292, glutamate 296, and glutamate 342; that span reads AGF. Residues 241 to 371 enclose the Nudix hydrolase domain; sequence PRVDPVVIML…EYRKAQRTAA (131 aa). Residues alanine 276, glutamate 292, glutamate 296, and glutamate 342 each coordinate Mg(2+). A Nudix box motif is present at residues 277 to 298; that stretch reads GFIEPGESLEEAVRRETWEETG. Residues 422 to 424 carry the Microbody targeting signal motif; sequence PDD.

The protein belongs to the Nudix hydrolase family. NudC subfamily. Mg(2+) is required as a cofactor. It depends on Zn(2+) as a cofactor. As to expression, expressed in roots, leaves, stems and inflorescences.

It localises to the plastid. The protein localises to the chloroplast. It catalyses the reaction a 5'-end NAD(+)-phospho-ribonucleoside in mRNA + H2O = a 5'-end phospho-adenosine-phospho-ribonucleoside in mRNA + beta-nicotinamide D-ribonucleotide + 2 H(+). It carries out the reaction NAD(+) + H2O = beta-nicotinamide D-ribonucleotide + AMP + 2 H(+). The enzyme catalyses NADH + H2O = reduced beta-nicotinamide D-ribonucleotide + AMP + 2 H(+). Its function is as follows. mRNA decapping enzyme that specifically removes the nicotinamide adenine dinucleotide (NAD) cap from a subset of mRNAs by hydrolyzing the diphosphate linkage to produce nicotinamide mononucleotide (NMN) and 5' monophosphate mRNA. The NAD-cap is present at the 5'-end of some RNAs; in contrast to the canonical N7 methylguanosine (m7G) cap, the NAD cap promotes mRNA decay. Mediates the hydrolysis of some nucleoside diphosphate derivatives. Has a high affinity for NADPH compared with that for NADH. This chain is Nudix hydrolase 19, chloroplastic (NUDT19), found in Arabidopsis thaliana (Mouse-ear cress).